We begin with the raw amino-acid sequence, 282 residues long: Phosphoglycerate mutase-like protein 1 (282 aa).

The Tele-phosphohistidine intermediate role is filled by histidine 23. The active-site Proton donor/acceptor is glutamate 135.

It belongs to the phosphoglycerate mutase family.

Functionally, may play a role in carbohydrates metabolism. The polypeptide is Phosphoglycerate mutase-like protein 1 (Arabidopsis thaliana (Mouse-ear cress)).